A 510-amino-acid polypeptide reads, in one-letter code: Cytochrome P450 94B1 (510 aa).

A helical membrane pass occupies residues 3–23 (MLNAIILILFPIIGFVLIFSF). Cys450 lines the heme pocket.

The protein belongs to the cytochrome P450 family. Heme serves as cofactor.

Its subcellular location is the membrane. The enzyme catalyses a jasmonyl-L-amino acid + reduced [NADPH--hemoprotein reductase] + O2 = a 12-hydroxyjasmonyl-L-alpha-amino acid + oxidized [NADPH--hemoprotein reductase] + H2O + H(+). Hydroxylase involved in the oxidation of the plant hormone jasmonoyl-L-isoleucine (JA-Ile), a bioactive phytohormone of the jasmonate-mediated signaling pathway. Converts JA-Ile to 12-hydroxy-JA-Ile. This chain is Cytochrome P450 94B1, found in Arabidopsis thaliana (Mouse-ear cress).